The chain runs to 300 residues: MGFQIEGVIPALITPFTDDLKGINEEGLRENVSRLLEAGVHGVVPAGTTGESSTLSHAEHRRVIEIVVDEVNGKVPVIAGAGSNSTREALELSTYAEDVGADAILSVVPYYNKPPQEGLFIHFSKIAEAVECPIILYNVPSRTGCALEPETAAKLAEEYSHIVGVKEASGDLDVVQRFIEETPDDFILLSGVDELTLPILAVGGVGVISVTANVAPELMVEMYEAWKSGDVERARELHYELLPLHRALFTETNPIPVKAAVELVGMASSPPRPPLKEAREDTKELLRRELKKLGLLPEGG.

Thr49 contributes to the pyruvate binding site. The active-site Proton donor/acceptor is the Tyr137. Catalysis depends on Lys166, which acts as the Schiff-base intermediate with substrate. Position 208 (Ile208) interacts with pyruvate.

It belongs to the DapA family. As to quaternary structure, homotetramer; dimer of dimers.

It is found in the cytoplasm. It carries out the reaction L-aspartate 4-semialdehyde + pyruvate = (2S,4S)-4-hydroxy-2,3,4,5-tetrahydrodipicolinate + H2O + H(+). It functions in the pathway amino-acid biosynthesis; L-lysine biosynthesis via DAP pathway; (S)-tetrahydrodipicolinate from L-aspartate: step 3/4. In terms of biological role, catalyzes the condensation of (S)-aspartate-beta-semialdehyde [(S)-ASA] and pyruvate to 4-hydroxy-tetrahydrodipicolinate (HTPA). This Methanopyrus kandleri (strain AV19 / DSM 6324 / JCM 9639 / NBRC 100938) protein is 4-hydroxy-tetrahydrodipicolinate synthase.